A 160-amino-acid polypeptide reads, in one-letter code: MKGGAGVPDLPSLDASGVRLAIVASSWHGKICDALLDGARKVAAGCGLDDPTVVRVLGAIEIPVVAQELARNHDAVVALGVVIRGQTPHFDYVCDAVTQGLTRVSLDSSTPIANGVLTTNTEEQALDRAGLPTSAEDKGAQATVAALATALTLRELRAHS.

5-amino-6-(D-ribitylamino)uracil is bound by residues tryptophan 27, 59–61 (AIE), and 81–83 (VVI). 86–87 (QT) contacts (2S)-2-hydroxy-3-oxobutyl phosphate. The active-site Proton donor is histidine 89. Position 114 (asparagine 114) interacts with 5-amino-6-(D-ribitylamino)uracil. Arginine 128 contacts (2S)-2-hydroxy-3-oxobutyl phosphate.

It belongs to the DMRL synthase family. Homopentamer.

It carries out the reaction (2S)-2-hydroxy-3-oxobutyl phosphate + 5-amino-6-(D-ribitylamino)uracil = 6,7-dimethyl-8-(1-D-ribityl)lumazine + phosphate + 2 H2O + H(+). Its pathway is cofactor biosynthesis; riboflavin biosynthesis; riboflavin from 2-hydroxy-3-oxobutyl phosphate and 5-amino-6-(D-ribitylamino)uracil: step 1/2. Its function is as follows. Catalyzes the formation of 6,7-dimethyl-8-ribityllumazine by condensation of 5-amino-6-(D-ribitylamino)uracil with 3,4-dihydroxy-2-butanone 4-phosphate. This is the penultimate step in the biosynthesis of riboflavin. This Mycobacterium tuberculosis (strain CDC 1551 / Oshkosh) protein is 6,7-dimethyl-8-ribityllumazine synthase (ribH).